Here is a 220-residue protein sequence, read N- to C-terminus: Deoxyribose-phosphate aldolase (220 aa).

Asp89 serves as the catalytic Proton donor/acceptor. The active-site Schiff-base intermediate with acetaldehyde is the Lys151. The Proton donor/acceptor role is filled by Lys180.

It belongs to the DeoC/FbaB aldolase family. DeoC type 1 subfamily.

Its subcellular location is the cytoplasm. It catalyses the reaction 2-deoxy-D-ribose 5-phosphate = D-glyceraldehyde 3-phosphate + acetaldehyde. It participates in carbohydrate degradation; 2-deoxy-D-ribose 1-phosphate degradation; D-glyceraldehyde 3-phosphate and acetaldehyde from 2-deoxy-alpha-D-ribose 1-phosphate: step 2/2. Functionally, catalyzes a reversible aldol reaction between acetaldehyde and D-glyceraldehyde 3-phosphate to generate 2-deoxy-D-ribose 5-phosphate. The polypeptide is Deoxyribose-phosphate aldolase (Streptococcus equi subsp. equi (strain 4047)).